Consider the following 75-residue polypeptide: Small ribosomal subunit protein bS18 (75 aa).

The protein belongs to the bacterial ribosomal protein bS18 family. Part of the 30S ribosomal subunit. Forms a tight heterodimer with protein bS6.

Binds as a heterodimer with protein bS6 to the central domain of the 16S rRNA, where it helps stabilize the platform of the 30S subunit. The protein is Small ribosomal subunit protein bS18 of Moorella thermoacetica (strain ATCC 39073 / JCM 9320).